We begin with the raw amino-acid sequence, 246 residues long: Zinc import ATP-binding protein ZnuC (246 aa).

The ABC transporter domain occupies 24–243 (LKIENLALAY…RTLNEIFSSY (220 aa)). 56–63 (GPNGGGKT) provides a ligand contact to ATP.

This sequence belongs to the ABC transporter superfamily. Zinc importer (TC 3.A.1.15.5) family. As to quaternary structure, the complex is composed of two ATP-binding proteins (ZnuC), two transmembrane proteins (ZnuB) and a solute-binding protein (ZnuA).

The protein localises to the cell membrane. The enzyme catalyses Zn(2+)(out) + ATP(in) + H2O(in) = Zn(2+)(in) + ADP(in) + phosphate(in) + H(+)(in). Functionally, part of the ABC transporter complex ZnuABC involved in zinc import. Responsible for energy coupling to the transport system. In Wolbachia pipientis wMel, this protein is Zinc import ATP-binding protein ZnuC.